The sequence spans 104 residues: SOSS complex subunit C (104 aa).

Ala-2 is subject to N-acetylalanine. Ser-50 carries the post-translational modification Phosphoserine.

This sequence belongs to the SOSS-C family. As to quaternary structure, component of the SOSS complex, composed of SOSS-B (SOSS-B1/NABP2 or SOSS-B2/NABP1), SOSS-A/INTS3 and SOSS-C/INIP. SOSS complexes containing SOSS-B1/NABP2 are more abundant than complexes containing SOSS-B2/NABP1. Interacts with INTS3; the interaction is direct.

Its subcellular location is the nucleus. Its function is as follows. Component of the SOSS complex, a multiprotein complex that functions downstream of the MRN complex to promote DNA repair and G2/M checkpoint. The SOSS complex associates with single-stranded DNA at DNA lesions and influences diverse endpoints in the cellular DNA damage response including cell-cycle checkpoint activation, recombinational repair and maintenance of genomic stability. Required for efficient homologous recombination-dependent repair of double-strand breaks (DSBs) and ATM-dependent signaling pathways. This chain is SOSS complex subunit C (INIP), found in Homo sapiens (Human).